Here is a 228-residue protein sequence, read N- to C-terminus: uncharacterized protein (228 aa).

This is an uncharacterized protein from Mycobacterium tuberculosis (strain CDC 1551 / Oshkosh).